A 339-amino-acid polypeptide reads, in one-letter code: Ketol-acid reductoisomerase (NADP(+)) (339 aa).

Residues 1–182 (MRVYYDRDAD…GGGRAGIIET (182 aa)) enclose the KARI N-terminal Rossmann domain. Residues 24-27 (YGSQ), R48, S51, S53, and 83-86 (DELQ) contribute to the NADP(+) site. H108 is a catalytic residue. G134 serves as a coordination point for NADP(+). A KARI C-terminal knotted domain is found at 183-328 (SFREETETDL…ARLRDMMPWI (146 aa)). Mg(2+) is bound by residues D191, E195, E227, and E231. Substrate is bound at residue S252.

It belongs to the ketol-acid reductoisomerase family. Requires Mg(2+) as cofactor.

It catalyses the reaction (2R)-2,3-dihydroxy-3-methylbutanoate + NADP(+) = (2S)-2-acetolactate + NADPH + H(+). It carries out the reaction (2R,3R)-2,3-dihydroxy-3-methylpentanoate + NADP(+) = (S)-2-ethyl-2-hydroxy-3-oxobutanoate + NADPH + H(+). Its pathway is amino-acid biosynthesis; L-isoleucine biosynthesis; L-isoleucine from 2-oxobutanoate: step 2/4. It functions in the pathway amino-acid biosynthesis; L-valine biosynthesis; L-valine from pyruvate: step 2/4. In terms of biological role, involved in the biosynthesis of branched-chain amino acids (BCAA). Catalyzes an alkyl-migration followed by a ketol-acid reduction of (S)-2-acetolactate (S2AL) to yield (R)-2,3-dihydroxy-isovalerate. In the isomerase reaction, S2AL is rearranged via a Mg-dependent methyl migration to produce 3-hydroxy-3-methyl-2-ketobutyrate (HMKB). In the reductase reaction, this 2-ketoacid undergoes a metal-dependent reduction by NADPH to yield (R)-2,3-dihydroxy-isovalerate. The chain is Ketol-acid reductoisomerase (NADP(+)) from Afipia carboxidovorans (strain ATCC 49405 / DSM 1227 / KCTC 32145 / OM5) (Oligotropha carboxidovorans).